The sequence spans 106 residues: Ribulose bisphosphate carboxylase small subunit (106 aa).

The protein belongs to the RuBisCO small chain family. As to quaternary structure, heterohexadecamer of 8 large and 8 small subunits.

It is found in the plastid. It localises to the cyanelle. In terms of biological role, ruBisCO catalyzes two reactions: the carboxylation of D-ribulose 1,5-bisphosphate, the primary event in carbon dioxide fixation, as well as the oxidative fragmentation of the pentose substrate. Both reactions occur simultaneously and in competition at the same active site. Although the small subunit is not catalytic it is essential for maximal activity. The sequence is that of Ribulose bisphosphate carboxylase small subunit from Cyanophora paradoxa.